The sequence spans 84 residues: Acyl carrier protein MbtL (84 aa).

A Carrier domain is found at 6 to 81; sequence STVSTTLLSI…ELEAAIAAKY (76 aa). Ser-41 carries the O-(pantetheine 4'-phosphoryl)serine modification.

Post-translationally, 4'-phosphopantetheine is transferred from CoA to a specific serine of apo-ACP, leading to the activated holo-ACP form.

It localises to the cytoplasm. It participates in siderophore biosynthesis; mycobactin biosynthesis. In terms of biological role, acyl carrier protein involved in the formation of acyl-S-ACP intermediates within the mycobactin biosynthesis process. The aliphatic chains carried by ACP are subsequently transferred on to the mycobactin core by MbtK. This Mycobacterium bovis (strain ATCC BAA-935 / AF2122/97) protein is Acyl carrier protein MbtL (mbtL).